The sequence spans 167 residues: Small heat shock protein C1 (167 aa).

The sHSP domain maps to 59–167 (PLYESNSIKS…EQDAREITIN (109 aa)).

This sequence belongs to the small heat shock protein (HSP20) family.

The polypeptide is Small heat shock protein C1 (hspC1) (Rickettsia felis (strain ATCC VR-1525 / URRWXCal2) (Rickettsia azadi)).